Here is an 82-residue protein sequence, read N- to C-terminus: Small ribosomal subunit protein bS18 (82 aa).

The protein belongs to the bacterial ribosomal protein bS18 family. In terms of assembly, part of the 30S ribosomal subunit. Forms a tight heterodimer with protein bS6.

Functionally, binds as a heterodimer with protein bS6 to the central domain of the 16S rRNA, where it helps stabilize the platform of the 30S subunit. The protein is Small ribosomal subunit protein bS18 of Bartonella bacilliformis (strain ATCC 35685 / KC583 / Herrer 020/F12,63).